Consider the following 388-residue polypeptide: Transcription factor SOX-7 (388 aa).

Disordered stretches follow at residues 20–46 (DAELSDGQSPPAVPRPPGDKGSESRIR) and 140–197 (RDQN…VDTY). 2 stretches are compositionally biased toward basic and acidic residues: residues 36–45 (PGDKGSESRI) and 146–164 (PEKRSGSRGALGEKEDRGE). The segment at residues 45-113 (IRRPMNAFMV…QHMQDYPNYK (69 aa)) is a DNA-binding region (HMG box). In terms of domain architecture, Sox C-terminal spans 268–388 (VSMMSPVPGC…ATYYNSYSVS (121 aa)).

In terms of assembly, interacts with CTNNB1/beta-catenin; this interaction may lead to the proteasomal degradation of active CTNNB1 and thus inhibition of Wnt/beta-catenin-stimulated transcription. Widely expressed in adult and fetal tissues. Present both in mesenchymal and epithelial cells in some adult tissues, including colon. Tends to be down-regulated in prostate adenocarcinomas and colorectal tumors due to promoter hypermethylation.

The protein localises to the nucleus. It is found in the cytoplasm. In terms of biological role, binds to and activates the CDH5 promoter, hence plays a role in the transcriptional regulation of genes expressed in the hemogenic endothelium and blocks further differentiation into blood precursors. May be required for the survival of both hematopoietic and endothelial precursors during specification. Competes with GATA4 for binding and activation of the FGF3 promoter. Represses Wnt/beta-catenin-stimulated transcription, probably by targeting CTNNB1 to proteasomal degradation. Binds the DNA sequence 5'-AACAAT-3'. The chain is Transcription factor SOX-7 (SOX7) from Homo sapiens (Human).